Reading from the N-terminus, the 592-residue chain is Imidazole glycerol phosphate synthase hisHF, chloroplastic (592 aa).

Residues 1–55 (MEATAAPFSSIVSSRQNFSSSSSIRASSPASLFLSQKSIGNVNRKFKSPRSLSVR) constitute a chloroplast transit peptide. The Glutamine amidotransferase type-1 domain occupies 63–271 (VVTLLDYGAG…LHPKLPATQK (209 aa)). Residues cysteine 141, histidine 246, and glutamate 248 each act as for GATase activity in the active site. The interval 280–592 (LAKRVIACLD…LQEERIEVRI (313 aa)) is cyclase. Catalysis depends on residues aspartate 289 and aspartate 447.

The protein in the C-terminal section; belongs to the HisA/HisF family.

The protein localises to the plastid. The protein resides in the chloroplast. The catalysed reaction is 5-[(5-phospho-1-deoxy-D-ribulos-1-ylimino)methylamino]-1-(5-phospho-beta-D-ribosyl)imidazole-4-carboxamide + L-glutamine = D-erythro-1-(imidazol-4-yl)glycerol 3-phosphate + 5-amino-1-(5-phospho-beta-D-ribosyl)imidazole-4-carboxamide + L-glutamate + H(+). The enzyme catalyses L-glutamine + H2O = L-glutamate + NH4(+). The protein operates within amino-acid biosynthesis; L-histidine biosynthesis; L-histidine from 5-phospho-alpha-D-ribose 1-diphosphate: step 5/9. IGPS catalyzes the conversion of PRFAR and glutamine to IGP, AICAR and glutamate. The glutaminase domain produces the ammonia necessary for the cyclase domain to produce IGP and AICAR from PRFAR. The ammonia is channeled to the active site of the cyclase domain. This is Imidazole glycerol phosphate synthase hisHF, chloroplastic (HISN4) from Arabidopsis thaliana (Mouse-ear cress).